We begin with the raw amino-acid sequence, 31 residues long: Cytochrome b6-f complex subunit 6 (31 aa).

Residues 4–26 (ITSYFGFLLAASTITSALLIGLS) traverse the membrane as a helical segment.

The protein belongs to the PetL family. As to quaternary structure, the 4 large subunits of the cytochrome b6-f complex are cytochrome b6, subunit IV (17 kDa polypeptide, PetD), cytochrome f and the Rieske protein, while the 4 small subunits are PetG, PetL, PetM and PetN. The complex functions as a dimer.

It is found in the plastid. Its subcellular location is the chloroplast thylakoid membrane. Functionally, component of the cytochrome b6-f complex, which mediates electron transfer between photosystem II (PSII) and photosystem I (PSI), cyclic electron flow around PSI, and state transitions. PetL is important for photoautotrophic growth as well as for electron transfer efficiency and stability of the cytochrome b6-f complex. This is Cytochrome b6-f complex subunit 6 from Chloranthus spicatus (Chulantree).